Here is a 281-residue protein sequence, read N- to C-terminus: Pantothenate synthetase (281 aa).

Residue 30-37 (MGYLHEGH) participates in ATP binding. Catalysis depends on His-37, which acts as the Proton donor. Gln-61 provides a ligand contact to (R)-pantoate. Residue Gln-61 coordinates beta-alanine. 147–150 (GQKD) contacts ATP. Gln-153 contributes to the (R)-pantoate binding site. Residues Val-176 and 184-187 (MSSR) contribute to the ATP site.

This sequence belongs to the pantothenate synthetase family. In terms of assembly, homodimer.

It localises to the cytoplasm. It carries out the reaction (R)-pantoate + beta-alanine + ATP = (R)-pantothenate + AMP + diphosphate + H(+). The protein operates within cofactor biosynthesis; (R)-pantothenate biosynthesis; (R)-pantothenate from (R)-pantoate and beta-alanine: step 1/1. Its function is as follows. Catalyzes the condensation of pantoate with beta-alanine in an ATP-dependent reaction via a pantoyl-adenylate intermediate. The chain is Pantothenate synthetase from Caldicellulosiruptor saccharolyticus (strain ATCC 43494 / DSM 8903 / Tp8T 6331).